The following is a 219-amino-acid chain: UPF0502 protein Gura_0277 (219 aa).

This sequence belongs to the UPF0502 family.

In Geotalea uraniireducens (strain Rf4) (Geobacter uraniireducens), this protein is UPF0502 protein Gura_0277.